The primary structure comprises 509 residues: Cytochrome P450 monooxygenase cpaH (509 aa).

A glycan (N-linked (GlcNAc...) asparagine) is linked at Asn15. Residues Thr31–Leu51 traverse the membrane as a helical segment. Residues Asn306 and Asn412 are each glycosylated (N-linked (GlcNAc...) asparagine). Heme is bound at residue Cys453.

Belongs to the cytochrome P450 family. Requires heme as cofactor.

The protein localises to the membrane. It functions in the pathway secondary metabolite biosynthesis. Its function is as follows. Cytochrome P450 monooxygenase; part of the gene cluster that mediates the biosynthesis of the fungal neurotoxin cyclopiazonic acid (CPA), a nanomolar inhibitor of Ca(2+)-ATPase with a unique pentacyclic indole tetramic acid scaffold. The hybrid two module polyketide synthase-nonribosomal peptide synthetase (PKS-NRPS) cpaS incorporates acetyl-CoA, malonyl-CoA, and tryptophan (Trp) and utilizes a C-terminal redox-incompetent reductase domain to make and release the tryptophan tetramic acid, cyclo-acetoacetyl-L-tryptophan (c-AATrp), as the first intermediate in the pathway. CpaS catalyzes a Dieckmann-type cyclization on the N-acetoacetyl-Trp intermediate bound in thioester linkage to the phosphopantetheinyl arm of the T domain to form and release c-AATrp. CpaD then regiospecifically dimethylallylates c-AATrp to form beta-cyclopiazonic acid. CpaD discriminates against free Trp but accepts tryptophan-containing thiohydantoins, diketopiperazines, and linear peptides as substrates for C4-prenylation and also acts as a regiospecific O-dimethylallyltransferase (DMAT) on a tyrosine-derived tetramic acid. The beta-cyclopiazonate dehydrogenase cpaO then carries out the dehydrogenation of beta-CPA to yield an unstable enimine product, which is captured by intramolecular cyclization to create the pentacyclic fused scaffold of alpha-cyclopiazonate. Finally, the cytochrome P450 monooxygenase cpaH mediates the conversion of CPA into the less toxic 2-oxocyclopiazonic acid, the end product of the CPA pathway in A.oryza. The polypeptide is Cytochrome P450 monooxygenase cpaH (Aspergillus oryzae (Yellow koji mold)).